We begin with the raw amino-acid sequence, 102 residues long: Aspartyl/glutamyl-tRNA(Asn/Gln) amidotransferase subunit C (102 aa).

This sequence belongs to the GatC family. In terms of assembly, heterotrimer of A, B and C subunits.

The catalysed reaction is L-glutamyl-tRNA(Gln) + L-glutamine + ATP + H2O = L-glutaminyl-tRNA(Gln) + L-glutamate + ADP + phosphate + H(+). It catalyses the reaction L-aspartyl-tRNA(Asn) + L-glutamine + ATP + H2O = L-asparaginyl-tRNA(Asn) + L-glutamate + ADP + phosphate + 2 H(+). Functionally, allows the formation of correctly charged Asn-tRNA(Asn) or Gln-tRNA(Gln) through the transamidation of misacylated Asp-tRNA(Asn) or Glu-tRNA(Gln) in organisms which lack either or both of asparaginyl-tRNA or glutaminyl-tRNA synthetases. The reaction takes place in the presence of glutamine and ATP through an activated phospho-Asp-tRNA(Asn) or phospho-Glu-tRNA(Gln). The chain is Aspartyl/glutamyl-tRNA(Asn/Gln) amidotransferase subunit C from Mycobacteroides abscessus (strain ATCC 19977 / DSM 44196 / CCUG 20993 / CIP 104536 / JCM 13569 / NCTC 13031 / TMC 1543 / L948) (Mycobacterium abscessus).